Consider the following 284-residue polypeptide: Diaminopimelate epimerase (284 aa).

Substrate contacts are provided by asparagine 21, glutamine 54, and asparagine 74. Catalysis depends on cysteine 83, which acts as the Proton donor. Substrate-binding positions include 84–85 (GN), asparagine 167, asparagine 200, and 218–219 (ER). The active-site Proton acceptor is cysteine 227. 228-229 (GS) serves as a coordination point for substrate.

The protein belongs to the diaminopimelate epimerase family. In terms of assembly, homodimer.

The protein localises to the cytoplasm. It catalyses the reaction (2S,6S)-2,6-diaminopimelate = meso-2,6-diaminopimelate. It participates in amino-acid biosynthesis; L-lysine biosynthesis via DAP pathway; DL-2,6-diaminopimelate from LL-2,6-diaminopimelate: step 1/1. In terms of biological role, catalyzes the stereoinversion of LL-2,6-diaminopimelate (L,L-DAP) to meso-diaminopimelate (meso-DAP), a precursor of L-lysine and an essential component of the bacterial peptidoglycan. This Buchnera aphidicola subsp. Acyrthosiphon pisum (strain APS) (Acyrthosiphon pisum symbiotic bacterium) protein is Diaminopimelate epimerase.